The primary structure comprises 501 residues: Cobyric acid synthase (501 aa).

The GATase cobBQ-type domain maps to 253-450 (EIEIAVLKLP…LHGIFENGRW (198 aa)). The active-site Nucleophile is the Cys334. His442 is an active-site residue.

It belongs to the CobB/CobQ family. CobQ subfamily.

It functions in the pathway cofactor biosynthesis; adenosylcobalamin biosynthesis. Catalyzes amidations at positions B, D, E, and G on adenosylcobyrinic A,C-diamide. NH(2) groups are provided by glutamine, and one molecule of ATP is hydrogenolyzed for each amidation. This is Cobyric acid synthase from Prochlorococcus marinus (strain MIT 9313).